The following is a 471-amino-acid chain: Cytidine and dCMP deaminase domain-containing protein 1 (471 aa).

The segment at 1–27 (MAESNSWRSHRESDGNRSIPNGDDARN) is disordered. 2 consecutive CMP/dCMP-type deaminase domains span residues 57–153 (LWME…LLSE) and 312–460 (GVIR…KLNG). Residues His99, Cys124, Cys127, and His393 each coordinate Zn(2+). The active-site Proton donor is Glu395. Zn(2+) contacts are provided by Cys421 and Cys424.

The protein belongs to the cytidine and deoxycytidylate deaminase family. Requires Zn(2+) as cofactor.

It catalyses the reaction 2'-deoxycytidine + H2O + H(+) = 2'-deoxyuridine + NH4(+). It carries out the reaction cytidine + H2O + H(+) = uridine + NH4(+). In terms of biological role, catalyzes the deamination of cytidine and deoxycytidine into uridine and deoxyuridine, respectively. This Danio rerio (Zebrafish) protein is Cytidine and dCMP deaminase domain-containing protein 1 (cdadc1).